The following is a 338-amino-acid chain: Holliday junction branch migration complex subunit RuvB (338 aa).

Residues 1–184 (MTEEERLLSA…FGIISHMEYY (184 aa)) form a large ATPase domain (RuvB-L) region. Residues Leu-23, Arg-24, Gly-65, Lys-68, Thr-69, Thr-70, 131 to 133 (EDF), Arg-174, Tyr-184, and Arg-221 contribute to the ATP site. Thr-69 contributes to the Mg(2+) binding site. The interval 185–255 (QEQDLKEIVL…IADKALTLLQ (71 aa)) is small ATPAse domain (RuvB-S). The interval 258–338 (HQGLDYVDQK…GYDYLEGRKN (81 aa)) is head domain (RuvB-H). Residues Arg-313 and Arg-318 each coordinate DNA.

The protein belongs to the RuvB family. Homohexamer. Forms an RuvA(8)-RuvB(12)-Holliday junction (HJ) complex. HJ DNA is sandwiched between 2 RuvA tetramers; dsDNA enters through RuvA and exits via RuvB. An RuvB hexamer assembles on each DNA strand where it exits the tetramer. Each RuvB hexamer is contacted by two RuvA subunits (via domain III) on 2 adjacent RuvB subunits; this complex drives branch migration. In the full resolvosome a probable DNA-RuvA(4)-RuvB(12)-RuvC(2) complex forms which resolves the HJ.

It localises to the cytoplasm. The catalysed reaction is ATP + H2O = ADP + phosphate + H(+). In terms of biological role, the RuvA-RuvB-RuvC complex processes Holliday junction (HJ) DNA during genetic recombination and DNA repair, while the RuvA-RuvB complex plays an important role in the rescue of blocked DNA replication forks via replication fork reversal (RFR). RuvA specifically binds to HJ cruciform DNA, conferring on it an open structure. The RuvB hexamer acts as an ATP-dependent pump, pulling dsDNA into and through the RuvAB complex. RuvB forms 2 homohexamers on either side of HJ DNA bound by 1 or 2 RuvA tetramers; 4 subunits per hexamer contact DNA at a time. Coordinated motions by a converter formed by DNA-disengaged RuvB subunits stimulates ATP hydrolysis and nucleotide exchange. Immobilization of the converter enables RuvB to convert the ATP-contained energy into a lever motion, pulling 2 nucleotides of DNA out of the RuvA tetramer per ATP hydrolyzed, thus driving DNA branch migration. The RuvB motors rotate together with the DNA substrate, which together with the progressing nucleotide cycle form the mechanistic basis for DNA recombination by continuous HJ branch migration. Branch migration allows RuvC to scan DNA until it finds its consensus sequence, where it cleaves and resolves cruciform DNA. This Enterococcus faecalis (strain ATCC 700802 / V583) protein is Holliday junction branch migration complex subunit RuvB.